Here is a 72-residue protein sequence, read N- to C-terminus: MIMRMTLTLFVLVVMTAASASGDALTEAKRIPYCGQTGAECYSWCIKQDLSKDWCCDFVKDIRMNPPADKCP.

Positions 1 to 22 are cleaved as a signal peptide; it reads MIMRMTLTLFVLVVMTAASASG. Positions 23–28 are excised as a propeptide; it reads DALTEA. 3 disulfide bridges follow: Cys34-Cys41, Cys45-Cys55, and Cys56-Cys71.

The protein belongs to the conotoxin K superfamily. As to expression, expressed by the venom duct.

It localises to the secreted. Its function is as follows. Neurotoxin that induces excitatory symptoms in mice following intracranial administration. No symptoms are observed after intraperitoneal and intravenous (tail vein) injections. The protein is Conotoxin im23a of Conus imperialis (Imperial cone).